The sequence spans 136 residues: Putative pre-16S rRNA nuclease (136 aa).

It belongs to the YqgF nuclease family.

The protein localises to the cytoplasm. Functionally, could be a nuclease involved in processing of the 5'-end of pre-16S rRNA. This Francisella tularensis subsp. tularensis (strain WY96-3418) protein is Putative pre-16S rRNA nuclease.